Reading from the N-terminus, the 335-residue chain is Putative D-threonate 4-phosphate dehydrogenase (335 aa).

Residues His-140 and Thr-141 each contribute to the substrate site. A divalent metal cation is bound by residues His-170, His-214, and His-269. Residues Lys-277 and Arg-295 each coordinate substrate.

This sequence belongs to the PdxA family. PdxA2 subfamily. In terms of assembly, homodimer. A divalent metal cation is required as a cofactor.

It carries out the reaction 4-O-phospho-D-threonate + NAD(+) = dihydroxyacetone phosphate + CO2 + NADH. Catalyzes the NAD-dependent oxidation and subsequent decarboxylation of D-threonate 4-phosphate to produce dihydroxyacetone phosphate (DHAP). The chain is Putative D-threonate 4-phosphate dehydrogenase from Symbiobacterium thermophilum (strain DSM 24528 / JCM 14929 / IAM 14863 / T).